The primary structure comprises 95 residues: UPF0235 protein Pcar_0617 (95 aa).

It belongs to the UPF0235 family.

This Syntrophotalea carbinolica (strain DSM 2380 / NBRC 103641 / GraBd1) (Pelobacter carbinolicus) protein is UPF0235 protein Pcar_0617.